The sequence spans 292 residues: Phosphatidylglycerol--prolipoprotein diacylglyceryl transferase (292 aa).

The next 7 membrane-spanning stretches (helical) occupy residues 25-45 (ITLHWYGLGYVVGILFAWWYA), 70-90 (FVVWSAISVVVGGRLGQVLVW), 102-122 (IIAVWDGGMSFHGGLIGIIIA), 138-158 (FDIIAAGAPIGIGIVRICNFI), 193-213 (FMEGFILFMILFIVIFTFKAF), 217-237 (GTVSGIFIIGYAIARSISEVY), and 255-275 (GFTYGMALSLPMLLLGFYLLL). R153 is an a 1,2-diacyl-sn-glycero-3-phospho-(1'-sn-glycerol) binding site.

Belongs to the Lgt family.

It localises to the cell inner membrane. The enzyme catalyses L-cysteinyl-[prolipoprotein] + a 1,2-diacyl-sn-glycero-3-phospho-(1'-sn-glycerol) = an S-1,2-diacyl-sn-glyceryl-L-cysteinyl-[prolipoprotein] + sn-glycerol 1-phosphate + H(+). It functions in the pathway protein modification; lipoprotein biosynthesis (diacylglyceryl transfer). In terms of biological role, catalyzes the transfer of the diacylglyceryl group from phosphatidylglycerol to the sulfhydryl group of the N-terminal cysteine of a prolipoprotein, the first step in the formation of mature lipoproteins. The polypeptide is Phosphatidylglycerol--prolipoprotein diacylglyceryl transferase (Bartonella tribocorum (strain CIP 105476 / IBS 506)).